The sequence spans 400 residues: Acetate kinase (400 aa).

Position 8 (asparagine 8) interacts with Mg(2+). Residue lysine 15 coordinates ATP. Residue arginine 89 coordinates substrate. Catalysis depends on aspartate 146, which acts as the Proton donor/acceptor. ATP is bound by residues histidine 206–glycine 210, aspartate 283–arginine 285, and glycine 331–asparagine 335. Glutamate 383 provides a ligand contact to Mg(2+).

Belongs to the acetokinase family. In terms of assembly, homodimer. It depends on Mg(2+) as a cofactor. Requires Mn(2+) as cofactor.

Its subcellular location is the cytoplasm. The enzyme catalyses acetate + ATP = acetyl phosphate + ADP. The protein operates within metabolic intermediate biosynthesis; acetyl-CoA biosynthesis; acetyl-CoA from acetate: step 1/2. Its function is as follows. Catalyzes the formation of acetyl phosphate from acetate and ATP. Can also catalyze the reverse reaction. The polypeptide is Acetate kinase (Streptococcus equi subsp. zooepidemicus (strain MGCS10565)).